The chain runs to 97 residues: UPF0213 protein BLi00048/BL00536 (97 aa).

Residues 4 to 79 enclose the GIY-YIG domain; the sequence is NSHYFYVLSC…KKLSRKNKER (76 aa).

The protein belongs to the UPF0213 family.

The chain is UPF0213 protein BLi00048/BL00536 from Bacillus licheniformis (strain ATCC 14580 / DSM 13 / JCM 2505 / CCUG 7422 / NBRC 12200 / NCIMB 9375 / NCTC 10341 / NRRL NRS-1264 / Gibson 46).